The following is a 592-amino-acid chain: Protein kinase C zeta type (592 aa).

A PB1 domain is found at 15 to 98 (RVRLKAHYGG…EVLIIHVFPS (84 aa)). An interaction with SQSTM1 region spans residues 79 to 145 (AFRLACQGRD…KRFNRRAYCG (67 aa)). Residues 130 to 180 (GHLFQAKRFNRRAYCGQCSERIWGLARQGYRCINCKLLVHKRCHVLVPLTC) form a Phorbol-ester/DAG-type zinc finger. The region spanning 252 to 518 (FDLIRVIGRG…FSDIKSHAFF (267 aa)) is the Protein kinase domain. ATP is bound by residues 258 to 266 (IGRGSYAKV) and lysine 281. Catalysis depends on aspartate 376, which acts as the Proton acceptor. Threonine 410 bears the Phosphothreonine; by PDPK1 and PI3K mark. The region spanning 519-590 (RSIDWDLLEK…INPLLLSAEE (72 aa)) is the AGC-kinase C-terminal domain. Residue threonine 560 is modified to Phosphothreonine. Position 591 is a phosphoserine (serine 591).

It belongs to the protein kinase superfamily. AGC Ser/Thr protein kinase family. PKC subfamily. As to quaternary structure, interacts with PARD6A, PARD6B and PARD6G. Part of a complex with PARD3, PARD6A or PARD6B or PARD6G and CDC42 or RAC1. Interacts with ADAP1/CENTA1. Forms a ternary complex with SQSTM1 and KCNAB2. Forms another ternary complex with SQSTM1 and GABRR3. Forms a complex with SQSTM1 and MAP2K5. Interacts (via the protein kinase domain) with WWC1. Forms a tripartite complex with WWC1 and DDR1, but predominantly in the absence of collagen. Component of the Par polarity complex, composed of at least phosphorylated PRKCZ, PARD3 and TIAM1. Interacts with PDPK1 (via N-terminal region). Interacts with WDFY2 (via WD repeats 1-3). Interacts with VAMP2. Forms a complex with WDFY2 and VAMP2. Interacts with APPL1. Interacts with WWC1, WWC2 and WWC3. Post-translationally, CDH5 is required for its phosphorylation at Thr-410. Phosphorylated by protein kinase PDPK1; phosphorylation is inhibited by the apoptotic C-terminal cleavage product of PKN2. Phosphorylation at Thr-410 by PI3K activates the kinase. In terms of tissue distribution, isoform 1: In brain, expressed in hippocampus, neocortex and cerebellum (at protein level). Also expressed in lung, liver, kidney, testis and to a lesser extent in pancreas, intestine and skin (at protein level). Isoform 2: Specifically expressed in brain where it localizes to the hippocampus, neocortex and cerebellum (at protein level).

It localises to the cytoplasm. The protein resides in the endosome. Its subcellular location is the cell junction. The protein localises to the membrane. It catalyses the reaction L-seryl-[protein] + ATP = O-phospho-L-seryl-[protein] + ADP + H(+). The enzyme catalyses L-threonyl-[protein] + ATP = O-phospho-L-threonyl-[protein] + ADP + H(+). Its activity is regulated as follows. Atypical PKCs (PRKCI and PRKCZ) exhibit an elevated basal enzymatic activity (that may be due to the interaction with SMG1 or SQSTM1) and are not regulated by diacylglycerol, phosphatidylserine, phorbol esters or calcium ions. Two specific sites, Thr-410 (activation loop of the kinase domain) and Thr-560 (turn motif), need to be phosphorylated for its full activation. Phosphatidylinositol 3,4,5-trisphosphate might be a physiological activator. Isoform 2: Constitutively active. Calcium- and diacylglycerol-independent serine/threonine-protein kinase that functions in phosphatidylinositol 3-kinase (PI3K) pathway and mitogen-activated protein (MAP) kinase cascade, and is involved in NF-kappa-B activation, mitogenic signaling, cell proliferation, cell polarity, inflammatory response and maintenance of long-term potentiation (LTP). Upon lipopolysaccharide (LPS) treatment in macrophages, or following mitogenic stimuli, functions downstream of PI3K to activate MAP2K1/MEK1-MAPK1/ERK2 signaling cascade independently of RAF1 activation. Required for insulin-dependent activation of AKT3, but may function as an adapter rather than a direct activator. Upon insulin treatment may act as a downstream effector of PI3K and contribute to the activation of translocation of the glucose transporter SLC2A4/GLUT4 and subsequent glucose transport in adipocytes. In EGF-induced cells, binds and activates MAP2K5/MEK5-MAPK7/ERK5 independently of its kinase activity and can activate JUN promoter through MEF2C. Through binding with SQSTM1/p62, functions in interleukin-1 signaling and activation of NF-kappa-B with the specific adapters RIPK1 and TRAF6. Participates in TNF-dependent transactivation of NF-kappa-B by phosphorylating and activating IKBKB kinase, which in turn leads to the degradation of NF-kappa-B inhibitors. In migrating astrocytes, forms a cytoplasmic complex with PARD6A and is recruited by CDC42 to function in the establishment of cell polarity along with the microtubule motor and dynein. In association with FEZ1, stimulates neuronal differentiation in PC12 cells. In the inflammatory response, is required for the T-helper 2 (Th2) differentiation process, including interleukin production, efficient activation of JAK1 and the subsequent phosphorylation and nuclear translocation of STAT6. May be involved in development of allergic airway inflammation (asthma), a process dependent on Th2 immune response. In the NF-kappa-B-mediated inflammatory response, can relieve SETD6-dependent repression of NF-kappa-B target genes by phosphorylating the RELA subunit at 'Ser-311'. Phosphorylates VAMP2 in vitro. Phosphorylates and activates LRRK1, which phosphorylates RAB proteins involved in intracellular trafficking. Its function is as follows. Involved in late synaptic long term potentiation phase in CA1 hippocampal cells and long term memory maintenance. This chain is Protein kinase C zeta type (Prkcz), found in Rattus norvegicus (Rat).